The following is an 826-amino-acid chain: Ribonucleoside-diphosphate reductase large subunit (826 aa).

Residues Thr-171, 186–187, Gly-217, 387–391, and 594–598 contribute to the substrate site; these read SC, NLCAE, and PTSGC. A disulfide bridge links Cys-187 with Cys-403. The Proton acceptor role is filled by Asn-387. Cys-389 acts as the Cysteine radical intermediate in catalysis. Glu-391 functions as the Proton acceptor in the catalytic mechanism. Residues 747-769 are disordered; sequence SVPREEQNERSPAEQMPPRPMEP. The segment covering 749–758 has biased composition (basic and acidic residues); the sequence is PREEQNERSP.

This sequence belongs to the ribonucleoside diphosphate reductase large chain family. Heterotetramer composed of a homodimer of the large subunit (R1) and a homodimer of the small subunit (R2). Larger multisubunit protein complex are also active, composed of (R1)n(R2)n.

It catalyses the reaction a 2'-deoxyribonucleoside 5'-diphosphate + [thioredoxin]-disulfide + H2O = a ribonucleoside 5'-diphosphate + [thioredoxin]-dithiol. Ribonucleoside-diphosphate reductase holoenzyme provides the precursors necessary for viral DNA synthesis. Allows virus growth in non-dividing cells, as well as reactivation from latency in infected hosts. Catalyzes the biosynthesis of deoxyribonucleotides from the corresponding ribonucleotides. This is Ribonucleoside-diphosphate reductase large subunit from Homo sapiens (Human).